A 198-amino-acid polypeptide reads, in one-letter code: Ribosomal RNA small subunit methyltransferase G (198 aa).

S-adenosyl-L-methionine contacts are provided by residues G74, F79, 123–124 (IQ), and R136.

It belongs to the methyltransferase superfamily. RNA methyltransferase RsmG family.

The protein localises to the cytoplasm. It carries out the reaction guanosine(527) in 16S rRNA + S-adenosyl-L-methionine = N(7)-methylguanosine(527) in 16S rRNA + S-adenosyl-L-homocysteine. In terms of biological role, specifically methylates the N7 position of guanine in position 527 of 16S rRNA. The sequence is that of Ribosomal RNA small subunit methyltransferase G from Orientia tsutsugamushi (strain Ikeda) (Rickettsia tsutsugamushi).